Reading from the N-terminus, the 509-residue chain is Lysine--tRNA ligase (509 aa).

Mg(2+) contacts are provided by E418 and E425.

It belongs to the class-II aminoacyl-tRNA synthetase family. Homodimer. Requires Mg(2+) as cofactor.

The protein localises to the cytoplasm. The enzyme catalyses tRNA(Lys) + L-lysine + ATP = L-lysyl-tRNA(Lys) + AMP + diphosphate. This Acinetobacter baumannii (strain ATCC 17978 / DSM 105126 / CIP 53.77 / LMG 1025 / NCDC KC755 / 5377) protein is Lysine--tRNA ligase.